The chain runs to 422 residues: Gamma-glutamyl phosphate reductase (422 aa).

It belongs to the gamma-glutamyl phosphate reductase family.

Its subcellular location is the cytoplasm. It carries out the reaction L-glutamate 5-semialdehyde + phosphate + NADP(+) = L-glutamyl 5-phosphate + NADPH + H(+). The protein operates within amino-acid biosynthesis; L-proline biosynthesis; L-glutamate 5-semialdehyde from L-glutamate: step 2/2. Functionally, catalyzes the NADPH-dependent reduction of L-glutamate 5-phosphate into L-glutamate 5-semialdehyde and phosphate. The product spontaneously undergoes cyclization to form 1-pyrroline-5-carboxylate. In Chloroflexus aggregans (strain MD-66 / DSM 9485), this protein is Gamma-glutamyl phosphate reductase.